The primary structure comprises 461 residues: V-type ATP synthase beta chain (461 aa).

Belongs to the ATPase alpha/beta chains family.

Functionally, produces ATP from ADP in the presence of a proton gradient across the membrane. The V-type beta chain is a regulatory subunit. This is V-type ATP synthase beta chain from Clostridium botulinum (strain Langeland / NCTC 10281 / Type F).